The sequence spans 128 residues: Large ribosomal subunit protein bL12 (128 aa).

The protein belongs to the bacterial ribosomal protein bL12 family. Homodimer. Part of the ribosomal stalk of the 50S ribosomal subunit. Forms a multimeric L10(L12)X complex, where L10 forms an elongated spine to which 2 to 4 L12 dimers bind in a sequential fashion. Binds GTP-bound translation factors.

Its function is as follows. Forms part of the ribosomal stalk which helps the ribosome interact with GTP-bound translation factors. Is thus essential for accurate translation. In Synechococcus sp. (strain CC9311), this protein is Large ribosomal subunit protein bL12.